We begin with the raw amino-acid sequence, 416 residues long: Serine hydroxymethyltransferase (416 aa).

Residues leucine 117 and 121-123 (GHL) contribute to the (6S)-5,6,7,8-tetrahydrofolate site. Lysine 225 bears the N6-(pyridoxal phosphate)lysine mark. 351-353 (SPF) serves as a coordination point for (6S)-5,6,7,8-tetrahydrofolate.

It belongs to the SHMT family. Homodimer. It depends on pyridoxal 5'-phosphate as a cofactor.

The protein resides in the cytoplasm. It catalyses the reaction (6R)-5,10-methylene-5,6,7,8-tetrahydrofolate + glycine + H2O = (6S)-5,6,7,8-tetrahydrofolate + L-serine. The protein operates within one-carbon metabolism; tetrahydrofolate interconversion. It functions in the pathway amino-acid biosynthesis; glycine biosynthesis; glycine from L-serine: step 1/1. In terms of biological role, catalyzes the reversible interconversion of serine and glycine with tetrahydrofolate (THF) serving as the one-carbon carrier. This reaction serves as the major source of one-carbon groups required for the biosynthesis of purines, thymidylate, methionine, and other important biomolecules. Also exhibits THF-independent aldolase activity toward beta-hydroxyamino acids, producing glycine and aldehydes, via a retro-aldol mechanism. The polypeptide is Serine hydroxymethyltransferase (Blochmanniella pennsylvanica (strain BPEN)).